We begin with the raw amino-acid sequence, 366 residues long: Carbamoyl phosphate synthase small chain (366 aa).

A CPSase region spans residues 1–171 (MLEKRYLVLE…KTPYVSTGSD (171 aa)). 3 residues coordinate L-glutamine: Ser-47, Gly-221, and Gly-223. Positions 173–360 (SVVLLDFGKK…ITMMKDFKEK (188 aa)) constitute a Glutamine amidotransferase type-1 domain. Cys-248 (nucleophile) is an active-site residue. L-glutamine contacts are provided by Leu-249, Gln-252, Asn-290, Gly-292, and Tyr-293. Residues His-333 and Glu-335 contribute to the active site.

This sequence belongs to the CarA family. Composed of two chains; the small (or glutamine) chain promotes the hydrolysis of glutamine to ammonia, which is used by the large (or ammonia) chain to synthesize carbamoyl phosphate. Tetramer of heterodimers (alpha,beta)4.

The catalysed reaction is hydrogencarbonate + L-glutamine + 2 ATP + H2O = carbamoyl phosphate + L-glutamate + 2 ADP + phosphate + 2 H(+). The enzyme catalyses L-glutamine + H2O = L-glutamate + NH4(+). It functions in the pathway amino-acid biosynthesis; L-arginine biosynthesis; carbamoyl phosphate from bicarbonate: step 1/1. The protein operates within pyrimidine metabolism; UMP biosynthesis via de novo pathway; (S)-dihydroorotate from bicarbonate: step 1/3. Its function is as follows. Small subunit of the glutamine-dependent carbamoyl phosphate synthetase (CPSase). CPSase catalyzes the formation of carbamoyl phosphate from the ammonia moiety of glutamine, carbonate, and phosphate donated by ATP, constituting the first step of 2 biosynthetic pathways, one leading to arginine and/or urea and the other to pyrimidine nucleotides. The small subunit (glutamine amidotransferase) binds and cleaves glutamine to supply the large subunit with the substrate ammonia. This Staphylococcus epidermidis (strain ATCC 35984 / DSM 28319 / BCRC 17069 / CCUG 31568 / BM 3577 / RP62A) protein is Carbamoyl phosphate synthase small chain.